Here is a 229-residue protein sequence, read N- to C-terminus: Uracil-DNA glycosylase (229 aa).

Aspartate 64 functions as the Proton acceptor in the catalytic mechanism.

The protein belongs to the uracil-DNA glycosylase (UDG) superfamily. UNG family.

It is found in the cytoplasm. It catalyses the reaction Hydrolyzes single-stranded DNA or mismatched double-stranded DNA and polynucleotides, releasing free uracil.. Functionally, excises uracil residues from the DNA which can arise as a result of misincorporation of dUMP residues by DNA polymerase or due to deamination of cytosine. The protein is Uracil-DNA glycosylase of Escherichia coli O45:K1 (strain S88 / ExPEC).